The following is a 134-amino-acid chain: Cytochrome b5 (134 aa).

The residue at position 2 (alanine 2) is an N-acetylalanine. 3 positions are modified to N6-acetyllysine: lysine 7, lysine 10, and lysine 19. Positions 9-85 constitute a Cytochrome b5 heme-binding domain; it reads VKYYTLEEIQ…SKTFIIGELH (77 aa). The heme site is built by histidine 44 and histidine 68. The chain crosses the membrane as a helical span at residues 109-131; that stretch reads WWTNWLIPAISALFVALIYHLYT.

The protein belongs to the cytochrome b5 family.

The protein localises to the endoplasmic reticulum membrane. It is found in the microsome membrane. Cytochrome b5 is a membrane-bound hemoprotein functioning as an electron carrier for several membrane-bound oxygenases. The chain is Cytochrome b5 (CYB5A) from Bos taurus (Bovine).